A 621-amino-acid polypeptide reads, in one-letter code: Kelch-like protein 40 (621 aa).

The region spanning 33–98 (LDCVVRAGER…LYTSEIALDE (66 aa)) is the BTB domain. The BACK domain occupies 133-239 (CLAVFRLGLL…PRAFLESRVE (107 aa)). Residues 265–295 (ITTLRKKKKGKDGAGAKEADKGTSKAKAEED) are disordered. Over residues 275 to 292 (KDGAGAKEADKGTSKAKA) the composition is skewed to basic and acidic residues. Kelch repeat units lie at residues 360-412 (QVFV…EALN), 413-462 (SIYV…SHMD), 463-510 (LVYV…VHDG), 512-557 (IIVA…SLVG), and 559-613 (LYAI…PVRL).

The protein belongs to the KLHL40 family. In terms of assembly, component of the BCR(KLHL40) E3 ubiquitin ligase complex, at least composed of CUL3, KLHL40 and RBX1. Interacts with LMOD3. Highly expressed in fetal (19, 23 and 31 weeks of gestation) and adult skeletal muscle; expression levels tend to be higher in fetal compared to postnatal muscles (at protein level). Also expressed in fetal and adult heart.

It localises to the cytoplasm. The protein localises to the myofibril. Its subcellular location is the sarcomere. It is found in the a band. The protein resides in the i band. In terms of biological role, substrate-specific adapter of a BCR (BTB-CUL3-RBX1) E3 ubiquitin ligase complex that acts as a key regulator of skeletal muscle development. The BCR(KLHL40) complex acts by mediating ubiquitination and degradation of TFDP1, thereby regulating the activity of the E2F:DP transcription factor complex. Promotes stabilization of LMOD3 by acting as a negative regulator of LMOD3 ubiquitination; the molecular process by which it negatively regulates ubiquitination of LMOD3 is however unclear. The protein is Kelch-like protein 40 of Homo sapiens (Human).